The sequence spans 713 residues: Protein-glucosylgalactosylhydroxylysine glucosidase (713 aa).

The signal sequence occupies residues Met1 to Ala21. Asn104, Asn160, Asn171, Asn186, and Asn283 each carry an N-linked (GlcNAc...) asparagine glycan. Trp317–Asp318 is a substrate binding site. Asn361 carries an N-linked (GlcNAc...) asparagine glycan. Glu451 acts as the Proton donor in catalysis. Asn457 and Asn481 each carry an N-linked (GlcNAc...) asparagine glycan. Lys521–Gln522 serves as a coordination point for substrate. N-linked (GlcNAc...) asparagine glycosylation is found at Asn535, Asn576, and Asn662.

The protein belongs to the glycosyl hydrolase 65 family.

The protein resides in the secreted. The catalysed reaction is (5R)-5-O-[alpha-D-glucosyl-(1-&gt;2)-beta-D-galactosyl]-5-hydroxy-L-lysyl-[collagen] + H2O = (5R)-5-O-(beta-D-galactosyl)-5-hydroxy-L-lysyl-[collagen] + D-glucose. Catalyzes the hydrolysis of glucose from the disaccharide unit linked to hydroxylysine residues of collagen and collagen-like proteins. This is Protein-glucosylgalactosylhydroxylysine glucosidase from Dictyostelium discoideum (Social amoeba).